The primary structure comprises 350 residues: Erythronate-4-phosphate dehydrogenase (350 aa).

Substrate is bound by residues S45 and T66. NAD(+) is bound by residues 124–125 (QV), D144, 203–205 (ASR), and D226. Residue R205 is part of the active site. The active site involves E231. H248 serves as the catalytic Proton donor. Residue G251 coordinates NAD(+).

It belongs to the D-isomer specific 2-hydroxyacid dehydrogenase family. PdxB subfamily. In terms of assembly, homodimer.

It localises to the cytoplasm. The catalysed reaction is 4-phospho-D-erythronate + NAD(+) = (R)-3-hydroxy-2-oxo-4-phosphooxybutanoate + NADH + H(+). It participates in cofactor biosynthesis; pyridoxine 5'-phosphate biosynthesis; pyridoxine 5'-phosphate from D-erythrose 4-phosphate: step 2/5. In terms of biological role, catalyzes the oxidation of erythronate-4-phosphate to 3-hydroxy-2-oxo-4-phosphonooxybutanoate. The sequence is that of Erythronate-4-phosphate dehydrogenase from Legionella pneumophila (strain Lens).